Reading from the N-terminus, the 302-residue chain is Deubiquitinase OTUD6B (302 aa).

A compositionally biased stretch (acidic residues) spans 1 to 10 (MEGSEDEEAE). Disordered regions lie at residues 1-52 (MEGS…KQLA) and 99-121 (EQQI…AALE). Positions 106 to 116 (RISKAQKRREK) are enriched in basic residues. The OTU domain occupies 156 to 293 (LEIKQIPSDG…GEHYNSVKLL (138 aa)). Positions 161–167 (IPSDGHC) are cys-loop. Asp164 is a catalytic residue. Catalysis depends on Cys167, which acts as the Nucleophile. The segment at 228–238 (IANTAAWGGQL) is variable-loop. The segment at 276–286 (YMRHAYGLGEH) is his-loop. The active site involves His286.

The catalysed reaction is Thiol-dependent hydrolysis of ester, thioester, amide, peptide and isopeptide bonds formed by the C-terminal Gly of ubiquitin (a 76-residue protein attached to proteins as an intracellular targeting signal).. Its function is as follows. Deubiquitinating enzyme that may play a role in the ubiquitin-dependent regulation of different cellular processes. This Gallus gallus (Chicken) protein is Deubiquitinase OTUD6B (OTUD6B).